A 190-amino-acid polypeptide reads, in one-letter code: Transcription termination/antitermination protein NusG (190 aa).

The 29-residue stretch at 138 to 166 (VGEIVTVTEGPFETFTGTVEEVDQEKARL) folds into the KOW domain.

It belongs to the NusG family.

Its function is as follows. Participates in transcription elongation, termination and antitermination. This Rickettsia bellii (strain RML369-C) protein is Transcription termination/antitermination protein NusG.